The chain runs to 209 residues: MIGLVGKKIGMTRIFTEEGTSIPVTVIELKENRITQVKNINTDLYCAIQVTTGIKKSNRLNKPQSGHFLKSGVTPGRGLWEFRTDKNNNFKIGQSITINIFNNVKKVDITGISKGKGFSGTVKRWNFHTQDATHGNSLSHRVPGSIGQNQTPGRVFKGKKMAGQLGNTRVTVQSLNIVRIDERRNLLLVKGAVPGATGSDLIVKPAIKV.

An N5-methylglutamine modification is found at Gln-150.

It belongs to the universal ribosomal protein uL3 family. Part of the 50S ribosomal subunit. Forms a cluster with proteins L14 and L19. Methylated by PrmB.

Its function is as follows. One of the primary rRNA binding proteins, it binds directly near the 3'-end of the 23S rRNA, where it nucleates assembly of the 50S subunit. In Buchnera aphidicola subsp. Acyrthosiphon pisum (strain 5A), this protein is Large ribosomal subunit protein uL3.